A 197-amino-acid polypeptide reads, in one-letter code: Holliday junction branch migration complex subunit RuvA (197 aa).

The tract at residues 1 to 63 is domain I; sequence MINKIHGKVI…ENELKLFGFL (63 aa). A domain II region spans residues 64–139; sequence NSDEREIFKE…KLLINSELES (76 aa). Position 139 (serine 139) is a region of interest, flexible linker. The interval 140–197 is domain III; the sequence is TGLFRFKELEESIVSMGFDRKIVNSKIREAFNLAEFANLKDSEKEQFLFKEVLKRISN.

This sequence belongs to the RuvA family. As to quaternary structure, homotetramer. Forms an RuvA(8)-RuvB(12)-Holliday junction (HJ) complex. HJ DNA is sandwiched between 2 RuvA tetramers; dsDNA enters through RuvA and exits via RuvB. An RuvB hexamer assembles on each DNA strand where it exits the tetramer. Each RuvB hexamer is contacted by two RuvA subunits (via domain III) on 2 adjacent RuvB subunits; this complex drives branch migration. In the full resolvosome a probable DNA-RuvA(4)-RuvB(12)-RuvC(2) complex forms which resolves the HJ.

It is found in the cytoplasm. In terms of biological role, the RuvA-RuvB-RuvC complex processes Holliday junction (HJ) DNA during genetic recombination and DNA repair, while the RuvA-RuvB complex plays an important role in the rescue of blocked DNA replication forks via replication fork reversal (RFR). RuvA specifically binds to HJ cruciform DNA, conferring on it an open structure. The RuvB hexamer acts as an ATP-dependent pump, pulling dsDNA into and through the RuvAB complex. HJ branch migration allows RuvC to scan DNA until it finds its consensus sequence, where it cleaves and resolves the cruciform DNA. The polypeptide is Holliday junction branch migration complex subunit RuvA (Borreliella burgdorferi (strain ATCC 35210 / DSM 4680 / CIP 102532 / B31) (Borrelia burgdorferi)).